Reading from the N-terminus, the 170-residue chain is Prenyl-diphosphate phosphatase (170 aa).

Residues H25–E155 enclose the Nudix hydrolase domain. Residues Y59 to G83 carry the Nudix box motif. Mg(2+) is bound by residues E77 and E81.

It belongs to the Nudix hydrolase family. It depends on Mg(2+) as a cofactor.

It carries out the reaction dimethylallyl diphosphate + H2O = dimethylallyl phosphate + phosphate + H(+). The catalysed reaction is isopentenyl diphosphate + H2O = isopentenyl phosphate + phosphate + H(+). The enzyme catalyses (2E,6E)-farnesyl diphosphate + H2O = (2E,6E)-farnesyl phosphate + phosphate + H(+). It catalyses the reaction (2E)-geranyl diphosphate + H2O = (2E)-geranyl phosphate + phosphate + H(+). It functions in the pathway isoprenoid biosynthesis. Functionally, hydrolyzes homoallylic isopentenyl diphosphate (IPP), its allylic isomer dimethylallyl diphosphate (DMAPP) and short-chain prenyl diphosphates geranyl diphosphate (GPP) and farnesyl diphosphate (FPP) to their corresponding monophosphate forms with high activity. The preferred substrate is IPP. ADP, NADPH, Ap5A and thiamine diphosphate (TPP) are weakly hydrolyzed. No hydrolysis with ATP, dNTPs, 8-OH-dGTP, NAD+, FAD or acetyl-CoA. The likely physiological role of this enzyme is to provide a substrate dimethylallyl phosphate (DMAP) for prenylated flavin mononucleotide (prenyl-FMN) synthase MM_1871 involved in the biosynthesis of prenyl-FMN, a coenzyme required in the archaea-specific mevalonate pathway. The protein is Prenyl-diphosphate phosphatase of Methanosarcina mazei (strain ATCC BAA-159 / DSM 3647 / Goe1 / Go1 / JCM 11833 / OCM 88) (Methanosarcina frisia).